A 121-amino-acid polypeptide reads, in one-letter code: MEYVLIYNIWFFSFLQDKPCFCFVDYACSIFLLSSYCGNCLTAVATKPNEMATTPKSIPLLTLVLLPSTTPSSSVLINVSSVSFFSSLESFCFTLALLSLLIPPLKLLCVKTKFFPLSSSI.

Helical transmembrane passes span 26–46, 57–77, and 90–110; these read YACSIFLLSSYCGNCLTAVAT, SIPLLTLVLLPSTTPSSSVLI, and SFCFTLALLSLLIPPLKLLCV.

It is found in the membrane. This is an uncharacterized protein from Saccharomyces cerevisiae (strain ATCC 204508 / S288c) (Baker's yeast).